Reading from the N-terminus, the 55-residue chain is Large ribosomal subunit protein bL32c (55 aa).

Belongs to the bacterial ribosomal protein bL32 family.

The protein localises to the plastid. The protein resides in the chloroplast. The polypeptide is Large ribosomal subunit protein bL32c (Daucus carota (Wild carrot)).